Consider the following 219-residue polypeptide: Small ribosomal subunit protein uS3c (219 aa).

A KH type-2 domain is found at 43–118; that stretch reads IKNYVQKNMK…KLNIAITRIA (76 aa).

The protein belongs to the universal ribosomal protein uS3 family. In terms of assembly, part of the 30S ribosomal subunit.

The protein resides in the plastid. It is found in the chloroplast. This is Small ribosomal subunit protein uS3c (rps3) from Panax ginseng (Korean ginseng).